The following is a 190-amino-acid chain: Shikimate kinase (190 aa).

13 to 18 is an ATP binding site; it reads GSGKTT. Thr-17 is a binding site for Mg(2+). Residues Asp-35, Arg-59, and Gly-81 each coordinate substrate. Residue Arg-119 coordinates ATP. Substrate is bound at residue Arg-138. ATP is bound at residue Gln-155.

The protein belongs to the shikimate kinase family. Monomer. Requires Mg(2+) as cofactor.

Its subcellular location is the cytoplasm. It catalyses the reaction shikimate + ATP = 3-phosphoshikimate + ADP + H(+). Its pathway is metabolic intermediate biosynthesis; chorismate biosynthesis; chorismate from D-erythrose 4-phosphate and phosphoenolpyruvate: step 5/7. Functionally, catalyzes the specific phosphorylation of the 3-hydroxyl group of shikimic acid using ATP as a cosubstrate. In Nitrosococcus oceani (strain ATCC 19707 / BCRC 17464 / JCM 30415 / NCIMB 11848 / C-107), this protein is Shikimate kinase.